A 288-amino-acid polypeptide reads, in one-letter code: ATP synthase gamma chain (288 aa).

Belongs to the ATPase gamma chain family. In terms of assembly, F-type ATPases have 2 components, CF(1) - the catalytic core - and CF(0) - the membrane proton channel. CF(1) has five subunits: alpha(3), beta(3), gamma(1), delta(1), epsilon(1). CF(0) has three main subunits: a, b and c.

It localises to the cell inner membrane. In terms of biological role, produces ATP from ADP in the presence of a proton gradient across the membrane. The gamma chain is believed to be important in regulating ATPase activity and the flow of protons through the CF(0) complex. The protein is ATP synthase gamma chain of Blochmanniella floridana.